Here is a 63-residue protein sequence, read N- to C-terminus: Bowman-Birk type proteinase inhibitor (63 aa).

Cystine bridges form between Cys-8–Cys-61, Cys-9–Cys-24, Cys-12–Cys-57, Cys-14–Cys-22, Cys-31–Cys-38, Cys-35–Cys-50, and Cys-40–Cys-48.

Belongs to the Bowman-Birk serine protease inhibitor family.

This inhibitor has two domains, each with separate antiprotease activity. Inhibits bovine trypsin and chymotrypsin, in a molar ratio of 1:1. The trypsin inhibition of FBI is independent of chymotrypsin inhibition, but the chymotrypsin inhibition is not completely independent of trypsin inhibition. The sequence is that of Bowman-Birk type proteinase inhibitor from Vicia faba (Broad bean).